Reading from the N-terminus, the 230-residue chain is Large ribosomal subunit protein uL1 (230 aa).

The protein belongs to the universal ribosomal protein uL1 family. Part of the 50S ribosomal subunit.

Binds directly to 23S rRNA. The L1 stalk is quite mobile in the ribosome, and is involved in E site tRNA release. In terms of biological role, protein L1 is also a translational repressor protein, it controls the translation of the L11 operon by binding to its mRNA. The protein is Large ribosomal subunit protein uL1 of Bacillus cereus (strain B4264).